We begin with the raw amino-acid sequence, 284 residues long: MDFIRAIILGVIEGITEWLPISSTGHLIIADEFIRLNQSAAFKEMFDVVIQLGAILSVVVLYFHKLNPFNKLNPADKQKTPREIQLTWRLWLKVLIAALPAAIIGLPLNDWLDKHFYHFVPVAFMLIIYGVAFIVIERRWVPNHEFSVMNIDRLPYRAALYIGLFQVLSLLPGTSRSGATIVGALLVGVSREVAAEFTFFLGIPVMFGASFIKILHFFKNGNSLSFEQFGVLLVACIVAFGVSMVAIKFLTDYVKKHDFTFFGKYRIVLGIILLIYAMFRAFLG.

8 helical membrane-spanning segments follow: residues 7–27, 44–64, 90–110, 116–136, 167–187, 197–217, 229–249, and 259–279; these read IILG…TGHL, EMFD…LYFH, LWLK…PLND, FYHF…FIVI, VLSL…ALLV, FTFF…ILHF, FGVL…AIKF, and FTFF…YAMF.

It belongs to the UppP family.

The protein localises to the cell membrane. The enzyme catalyses di-trans,octa-cis-undecaprenyl diphosphate + H2O = di-trans,octa-cis-undecaprenyl phosphate + phosphate + H(+). Its function is as follows. Catalyzes the dephosphorylation of undecaprenyl diphosphate (UPP). Confers resistance to bacitracin. The polypeptide is Undecaprenyl-diphosphatase (Lactococcus lactis subsp. lactis (strain IL1403) (Streptococcus lactis)).